Here is a 51-residue protein sequence, read N- to C-terminus: Small ribosomal subunit protein uS13 (51 aa).

It belongs to the universal ribosomal protein uS13 family. Part of the 30S ribosomal subunit. Forms a loose heterodimer with protein S19. Forms two bridges to the 50S subunit in the 70S ribosome.

Its function is as follows. Located at the top of the head of the 30S subunit, it contacts several helices of the 16S rRNA. In the 70S ribosome it contacts the 23S rRNA (bridge B1a) and protein L5 of the 50S subunit (bridge B1b), connecting the 2 subunits; these bridges are implicated in subunit movement. Contacts the tRNAs in the A and P-sites. In Lactococcus lactis subsp. cremoris (Streptococcus cremoris), this protein is Small ribosomal subunit protein uS13 (rpsM).